Reading from the N-terminus, the 156-residue chain is Large ribosomal subunit protein uL22 (156 aa).

It belongs to the universal ribosomal protein uL22 family. As to quaternary structure, part of the 50S ribosomal subunit.

In terms of biological role, this protein binds specifically to 23S rRNA. It makes multiple contacts with different domains of the 23S rRNA in the assembled 50S subunit and ribosome. Functionally, the globular domain of the protein is located near the polypeptide exit tunnel on the outside of the subunit, while an extended beta-hairpin is found that lines the wall of the exit tunnel in the center of the 70S ribosome. This chain is Large ribosomal subunit protein uL22, found in Sulfurisphaera tokodaii (strain DSM 16993 / JCM 10545 / NBRC 100140 / 7) (Sulfolobus tokodaii).